We begin with the raw amino-acid sequence, 201 residues long: Potassium-transporting ATPase KdpC subunit (201 aa).

A helical transmembrane segment spans residues 7-27 (PAFVVLIALTALTGLAYPLAM).

It belongs to the KdpC family. In terms of assembly, the system is composed of three essential subunits: KdpA, KdpB and KdpC.

Its subcellular location is the cell inner membrane. Functionally, part of the high-affinity ATP-driven potassium transport (or Kdp) system, which catalyzes the hydrolysis of ATP coupled with the electrogenic transport of potassium into the cytoplasm. This subunit acts as a catalytic chaperone that increases the ATP-binding affinity of the ATP-hydrolyzing subunit KdpB by the formation of a transient KdpB/KdpC/ATP ternary complex. This chain is Potassium-transporting ATPase KdpC subunit, found in Xanthobacter autotrophicus (strain ATCC BAA-1158 / Py2).